Here is a 308-residue protein sequence, read N- to C-terminus: Probable GTP 3',8-cyclase (308 aa).

The Radical SAM core domain occupies 4–222 (RFGRPLEDLR…KKLIRKKHFR (219 aa)). R13 provides a ligand contact to GTP. [4Fe-4S] cluster contacts are provided by C20, C24, and C27. K60 lines the GTP pocket. G64 provides a ligand contact to S-adenosyl-L-methionine. Position 90 (T90) interacts with GTP. Residue S114 coordinates S-adenosyl-L-methionine. A GTP-binding site is contributed by K151. Residues C245 and C248 each contribute to the [4Fe-4S] cluster site. Residue 250 to 252 (RIR) participates in GTP binding. C262 is a binding site for [4Fe-4S] cluster.

This sequence belongs to the radical SAM superfamily. MoaA family. Requires [4Fe-4S] cluster as cofactor.

The catalysed reaction is GTP + AH2 + S-adenosyl-L-methionine = (8S)-3',8-cyclo-7,8-dihydroguanosine 5'-triphosphate + 5'-deoxyadenosine + L-methionine + A + H(+). It functions in the pathway cofactor biosynthesis; molybdopterin biosynthesis. Its function is as follows. Catalyzes the cyclization of GTP to (8S)-3',8-cyclo-7,8-dihydroguanosine 5'-triphosphate. In Saccharolobus solfataricus (strain ATCC 35092 / DSM 1617 / JCM 11322 / P2) (Sulfolobus solfataricus), this protein is Probable GTP 3',8-cyclase.